Consider the following 219-residue polypeptide: MADQIEIQRMNQDLQEPLAEIMPSVLTAMSYLLQRVSETNDNLSQKQKPSSFTGVTKPSISIRSYLERIFEYANCSYSCYIVAYIYLDRFVKKQPFLPINSFNVHRLIITSVLVSAKFMDDLSYNNEYYAKVGGISREEMNMLELDFLFGIGFELNVTVSTFNNYCCFLQREMAMLMKMKSLFLEPSSFKISSKTKLVMYPHEEDSLSTHHNKKQLAAA.

The protein belongs to the cyclin family. Cyclin U/P subfamily. In terms of assembly, interacts with CDKA-1. Expressed at low levels in roots, stems and flowers. Expressed in the shoot apex, leaf primordia and young leaves.

The chain is Cyclin-U4-3 (CYCU4-3) from Arabidopsis thaliana (Mouse-ear cress).